We begin with the raw amino-acid sequence, 409 residues long: uncharacterized protein (409 aa).

The OBG-type G domain occupies 5–274 (ILIGFVGKPS…LAKQGFVKYE (270 aa)). Residues 11–18 (GKPSSGKS) and 83–87 (DVAGL) contribute to the GTP site.

Belongs to the TRAFAC class OBG-HflX-like GTPase superfamily. OBG GTPase family.

The protein localises to the cytoplasm. The protein resides in the nucleus. This is an uncharacterized protein from Schizosaccharomyces pombe (strain 972 / ATCC 24843) (Fission yeast).